The primary structure comprises 56 residues: Large ribosomal subunit protein bL33 (56 aa).

Residues 1–12 (MASKGGRDKIKL) are compositionally biased toward basic and acidic residues. The disordered stretch occupies residues 1-28 (MASKGGRDKIKLESTAGTGHFYTTTKNK). The span at 15-25 (TAGTGHFYTTT) shows a compositional bias: polar residues.

This sequence belongs to the bacterial ribosomal protein bL33 family.

This Cupriavidus necator (strain ATCC 17699 / DSM 428 / KCTC 22496 / NCIMB 10442 / H16 / Stanier 337) (Ralstonia eutropha) protein is Large ribosomal subunit protein bL33.